Here is a 419-residue protein sequence, read N- to C-terminus: UDP-N-acetylglucosamine 1-carboxyvinyltransferase (419 aa).

Residue Lys22 to Asn23 coordinates phosphoenolpyruvate. Residue Arg93 coordinates UDP-N-acetyl-alpha-D-glucosamine. Cys117 acts as the Proton donor in catalysis. A 2-(S-cysteinyl)pyruvic acid O-phosphothioketal modification is found at Cys117. UDP-N-acetyl-alpha-D-glucosamine contacts are provided by Asp307 and Ile329.

It belongs to the EPSP synthase family. MurA subfamily.

It is found in the cytoplasm. The catalysed reaction is phosphoenolpyruvate + UDP-N-acetyl-alpha-D-glucosamine = UDP-N-acetyl-3-O-(1-carboxyvinyl)-alpha-D-glucosamine + phosphate. It participates in cell wall biogenesis; peptidoglycan biosynthesis. In terms of biological role, cell wall formation. Adds enolpyruvyl to UDP-N-acetylglucosamine. The sequence is that of UDP-N-acetylglucosamine 1-carboxyvinyltransferase from Shewanella sp. (strain ANA-3).